Reading from the N-terminus, the 93-residue chain is Small ribosomal subunit protein uS19 (93 aa).

Belongs to the universal ribosomal protein uS19 family.

Its function is as follows. Protein S19 forms a complex with S13 that binds strongly to the 16S ribosomal RNA. This is Small ribosomal subunit protein uS19 from Dehalococcoides mccartyi (strain ATCC BAA-2266 / KCTC 15142 / 195) (Dehalococcoides ethenogenes (strain 195)).